The primary structure comprises 762 residues: 5-methyltetrahydropteroyltriglutamate--homocysteine methyltransferase (762 aa).

5-methyltetrahydropteroyltri-L-glutamate contacts are provided by residues 18–21 and K112; that span reads REWK. L-homocysteine is bound by residues 435 to 437 and E488; that span reads IGS. L-methionine-binding positions include 435 to 437 and E488; that span reads IGS. Residues 519–520 and W565 each bind 5-methyltetrahydropteroyltri-L-glutamate; that span reads RC. D603 is an L-homocysteine binding site. D603 contacts L-methionine. E609 provides a ligand contact to 5-methyltetrahydropteroyltri-L-glutamate. Residues H645, C647, and E669 each coordinate Zn(2+). The active-site Proton donor is the H698. C730 provides a ligand contact to Zn(2+).

It belongs to the vitamin-B12 independent methionine synthase family. Zn(2+) is required as a cofactor.

The catalysed reaction is 5-methyltetrahydropteroyltri-L-glutamate + L-homocysteine = tetrahydropteroyltri-L-glutamate + L-methionine. It functions in the pathway amino-acid biosynthesis; L-methionine biosynthesis via de novo pathway; L-methionine from L-homocysteine (MetE route): step 1/1. Functionally, catalyzes the transfer of a methyl group from 5-methyltetrahydrofolate to homocysteine resulting in methionine formation. The protein is 5-methyltetrahydropteroyltriglutamate--homocysteine methyltransferase of Bacillus licheniformis (strain ATCC 14580 / DSM 13 / JCM 2505 / CCUG 7422 / NBRC 12200 / NCIMB 9375 / NCTC 10341 / NRRL NRS-1264 / Gibson 46).